We begin with the raw amino-acid sequence, 122 residues long: Large ribosomal subunit protein uL14c (122 aa).

It belongs to the universal ribosomal protein uL14 family. As to quaternary structure, part of the 50S ribosomal subunit.

It is found in the plastid. The protein resides in the chloroplast. Functionally, binds to 23S rRNA. The protein is Large ribosomal subunit protein uL14c of Morus indica (Mulberry).